The chain runs to 262 residues: 3-methyl-2-oxobutanoate hydroxymethyltransferase (262 aa).

2 residues coordinate Mg(2+): Asp-44 and Asp-83. Residues 44–45 (DS), Asp-83, and Lys-112 contribute to the 3-methyl-2-oxobutanoate site. Glu-114 provides a ligand contact to Mg(2+). Glu-177 functions as the Proton acceptor in the catalytic mechanism.

Belongs to the PanB family. As to quaternary structure, homodecamer; pentamer of dimers. The cofactor is Mg(2+).

The protein localises to the cytoplasm. The enzyme catalyses 3-methyl-2-oxobutanoate + (6R)-5,10-methylene-5,6,7,8-tetrahydrofolate + H2O = 2-dehydropantoate + (6S)-5,6,7,8-tetrahydrofolate. It participates in cofactor biosynthesis; coenzyme A biosynthesis. In terms of biological role, catalyzes the reversible reaction in which hydroxymethyl group from 5,10-methylenetetrahydrofolate is transferred onto alpha-ketoisovalerate to form ketopantoate. The chain is 3-methyl-2-oxobutanoate hydroxymethyltransferase from Metallosphaera sedula (strain ATCC 51363 / DSM 5348 / JCM 9185 / NBRC 15509 / TH2).